A 471-amino-acid chain; its full sequence is Arginine biosynthesis bifunctional protein ArgJ, mitochondrial (471 aa).

Residues Thr190, Lys216, Thr239, Glu327, Asn466, and Ser471 each coordinate substrate. Thr239 functions as the Nucleophile in the catalytic mechanism.

Belongs to the ArgJ family. In terms of assembly, heterodimer of an alpha and a beta chain. The alpha and beta chains are autoproteolytically processed from a single precursor protein within the mitochondrion.

The protein localises to the mitochondrion matrix. The catalysed reaction is N(2)-acetyl-L-ornithine + L-glutamate = N-acetyl-L-glutamate + L-ornithine. It catalyses the reaction L-glutamate + acetyl-CoA = N-acetyl-L-glutamate + CoA + H(+). Its pathway is amino-acid biosynthesis; L-arginine biosynthesis; L-ornithine and N-acetyl-L-glutamate from L-glutamate and N(2)-acetyl-L-ornithine (cyclic): step 1/1. The protein operates within amino-acid biosynthesis; L-arginine biosynthesis; N(2)-acetyl-L-ornithine from L-glutamate: step 1/4. Functionally, catalyzes two activities which are involved in the cyclic version of arginine biosynthesis: the synthesis of acetylglutamate from glutamate and acetyl-CoA, and of ornithine by transacetylation between acetylornithine and glutamate. This is Arginine biosynthesis bifunctional protein ArgJ, mitochondrial from Coprinopsis cinerea (strain Okayama-7 / 130 / ATCC MYA-4618 / FGSC 9003) (Inky cap fungus).